The sequence spans 352 residues: D-arabitol-phosphate dehydrogenase (352 aa).

The Mn(2+) site is built by C43, H65, C96, C99, C102, C110, and E151.

Belongs to the zinc-containing alcohol dehydrogenase family. As to quaternary structure, homotetramer. Mn(2+) is required as a cofactor.

The catalysed reaction is D-arabinitol 1-phosphate + NAD(+) = D-xylulose 5-phosphate + NADH + H(+). Inhibited by EDTA, 4-hydroxymercuribenzoic acid (PHMB), mercury and zinc ions at a concentration of 2 mM. Its function is as follows. Involved in the arabitol catabolism via the arabitol phosphate route. Catalyzes only the transformation of D-arabitol 1-phosphate (Arb1P) and D-arabitol 5-phosphate (Arb5P) into D-xylulose 5-phosphate (Xlu5P) and ribulose 5-phosphate, respectively. It can use both NAD and NADP. The chain is D-arabitol-phosphate dehydrogenase from Enterococcus avium (Streptococcus avium).